A 796-amino-acid polypeptide reads, in one-letter code: Inactive dipeptidyl peptidase 10 (796 aa).

Over 1–34 (MNQTASVSHHIKCQPSKTIKELGSNSPPQRNWKG) the chain is Cytoplasmic. The interval 1–56 (MNQTASVSHHIKCQPSKTIKELGSNSPPQRNWKGIAIALLVILVVCSLITMSVILL) is mediates effects on KCND2. Residues 35-55 (IAIALLVILVVCSLITMSVIL) traverse the membrane as a helical; Signal-anchor for type II membrane protein segment. Residues 56–796 (LTPDELTNSS…VLPQEPEEDE (741 aa)) lie on the Extracellular side of the membrane. 3 N-linked (GlcNAc...) asparagine glycosylation sites follow: N90, N111, and N119. Residues Y138 and Y143 each carry the phosphotyrosine modification. N257, N342, and N748 each carry an N-linked (GlcNAc...) asparagine glycan.

This sequence belongs to the peptidase S9B family. DPPIV subfamily. May form oligomers. Interacts with KCND1. Interacts with KCND2. In terms of processing, N-glycosylation is important for cell surface expression, specially at Asn-257, which is crucial. In terms of tissue distribution, found in serum, T-cells and brain (at protein level). Expressed in brain, pancreas, spinal cord and adrenal glands.

The protein resides in the cell membrane. Its function is as follows. Promotes cell surface expression of the potassium channel KCND2. Modulates the activity and gating characteristics of the potassium channel KCND2. Has no dipeptidyl aminopeptidase activity. This chain is Inactive dipeptidyl peptidase 10 (DPP10), found in Homo sapiens (Human).